The following is a 532-amino-acid chain: 2,3-bisphosphoglycerate-independent phosphoglycerate mutase (532 aa).

The Mn(2+) site is built by Asp15 and Ser65. Ser65 functions as the Phosphoserine intermediate in the catalytic mechanism. Substrate contacts are provided by residues His126, 156-157 (RD), Arg188, Arg194, 258-261 (RPDR), and Lys331. Residues Asp398, His402, Asp439, His440, and His457 each contribute to the Mn(2+) site.

The protein belongs to the BPG-independent phosphoglycerate mutase family. Monomer. Mn(2+) is required as a cofactor.

It carries out the reaction (2R)-2-phosphoglycerate = (2R)-3-phosphoglycerate. Its pathway is carbohydrate degradation; glycolysis; pyruvate from D-glyceraldehyde 3-phosphate: step 3/5. Catalyzes the interconversion of 2-phosphoglycerate and 3-phosphoglycerate. This Rippkaea orientalis (strain PCC 8801 / RF-1) (Cyanothece sp. (strain PCC 8801)) protein is 2,3-bisphosphoglycerate-independent phosphoglycerate mutase.